An 872-amino-acid chain; its full sequence is Alanine--tRNA ligase (872 aa).

The Zn(2+) site is built by H567, H571, C669, and H673.

Belongs to the class-II aminoacyl-tRNA synthetase family. It depends on Zn(2+) as a cofactor.

Its subcellular location is the cytoplasm. The catalysed reaction is tRNA(Ala) + L-alanine + ATP = L-alanyl-tRNA(Ala) + AMP + diphosphate. Functionally, catalyzes the attachment of alanine to tRNA(Ala) in a two-step reaction: alanine is first activated by ATP to form Ala-AMP and then transferred to the acceptor end of tRNA(Ala). Also edits incorrectly charged Ser-tRNA(Ala) and Gly-tRNA(Ala) via its editing domain. This Streptococcus pneumoniae serotype 4 (strain ATCC BAA-334 / TIGR4) protein is Alanine--tRNA ligase.